A 1018-amino-acid polypeptide reads, in one-letter code: Putative type I restriction enzyme MjaVIIIP endonuclease subunit (1018 aa).

This sequence belongs to the HsdR family. In terms of assembly, the type I restriction/modification system is composed of three polypeptides R, M and S.

The catalysed reaction is Endonucleolytic cleavage of DNA to give random double-stranded fragments with terminal 5'-phosphates, ATP is simultaneously hydrolyzed.. Its function is as follows. The restriction (R) subunit of a type I restriction enzyme that recognizes 5'-GAYN(5)GTAA-3' and cleaves a random distance away. The R subunit is required for both endonuclease and ATPase activities but not for modification. After locating a non-methylated recognition site, the enzyme complex serves as a molecular motor that translocates DNA in an ATP-dependent manner until a collision occurs that triggers cleavage. This is Putative type I restriction enzyme MjaVIIIP endonuclease subunit from Methanocaldococcus jannaschii (strain ATCC 43067 / DSM 2661 / JAL-1 / JCM 10045 / NBRC 100440) (Methanococcus jannaschii).